A 133-amino-acid chain; its full sequence is MTLNLCVLTPNRIIWDSEVKEIILPTNSGQIGVLPNHAPIATAVDIGILRIRLDDQWVTMALMGGFARIGNNEITILVNDAERGSDIDLQEAQGTLEIAEANLNKAEGKRQVIEANLALRRARTRVEAVNTIS.

The protein belongs to the ATPase epsilon chain family. F-type ATPases have 2 components, CF(1) - the catalytic core - and CF(0) - the membrane proton channel. CF(1) has five subunits: alpha(3), beta(3), gamma(1), delta(1), epsilon(1). CF(0) has three main subunits: a, b and c.

The protein localises to the plastid. It localises to the chloroplast thylakoid membrane. In terms of biological role, produces ATP from ADP in the presence of a proton gradient across the membrane. This is ATP synthase epsilon chain, chloroplastic from Piper cenocladum (Ant piper).